A 394-amino-acid polypeptide reads, in one-letter code: Elongation factor Tu 1 (394 aa).

One can recognise a tr-type G domain in the interval 10 to 204 (KPHVNVGTIG…ALDSYIPEPE (195 aa)). A G1 region spans residues 19 to 26 (GHVDHGKT). 19–26 (GHVDHGKT) contacts GTP. T26 serves as a coordination point for Mg(2+). A G2 region spans residues 60-64 (GITIN). Positions 81–84 (DCPG) are G3. GTP contacts are provided by residues 81 to 85 (DCPGH) and 136 to 139 (NKCD). Positions 136 to 139 (NKCD) are G4. The tract at residues 174-176 (SAL) is G5.

This sequence belongs to the TRAFAC class translation factor GTPase superfamily. Classic translation factor GTPase family. EF-Tu/EF-1A subfamily. As to quaternary structure, monomer.

It localises to the cytoplasm. The enzyme catalyses GTP + H2O = GDP + phosphate + H(+). Its function is as follows. GTP hydrolase that promotes the GTP-dependent binding of aminoacyl-tRNA to the A-site of ribosomes during protein biosynthesis. The polypeptide is Elongation factor Tu 1 (Shewanella sp. (strain MR-4)).